The primary structure comprises 219 residues: Probable GTP-binding protein EngB (219 aa).

An EngB-type G domain is found at 24 to 207 (VQPEIAFAGR…HELIESWLRP (184 aa)). GTP-binding positions include 32-39 (GRSNAGKS), 59-63 (GRTQH), 81-84 (DLPG), 148-151 (TKCD), and 186-188 (FSA). Residues S39 and T61 each contribute to the Mg(2+) site.

This sequence belongs to the TRAFAC class TrmE-Era-EngA-EngB-Septin-like GTPase superfamily. EngB GTPase family. The cofactor is Mg(2+).

Functionally, necessary for normal cell division and for the maintenance of normal septation. The chain is Probable GTP-binding protein EngB from Burkholderia cenocepacia (strain HI2424).